The following is a 427-amino-acid chain: UPF0229 protein YeaH (427 aa).

Residues 87–110 (RIERSQGGGGGSGSGQGQASQDGE) form a disordered region. Gly residues predominate over residues 92 to 102 (QGGGGGSGSGQ).

The protein belongs to the UPF0229 family.

The protein is UPF0229 protein YeaH of Escherichia coli O6:K15:H31 (strain 536 / UPEC).